We begin with the raw amino-acid sequence, 592 residues long: UvrABC system protein C (592 aa).

The 78-residue stretch at 14 to 91 (KKPGCYLWKN…IKKHKPRYNI (78 aa)) folds into the GIY-YIG domain. The UVR domain maps to 197–232 (DQVLKDLKEKESIASEKFDFEQAKKYLDLQKAINLI).

The protein belongs to the UvrC family. In terms of assembly, interacts with UvrB in an incision complex.

It localises to the cytoplasm. In terms of biological role, the UvrABC repair system catalyzes the recognition and processing of DNA lesions. UvrC both incises the 5' and 3' sides of the lesion. The N-terminal half is responsible for the 3' incision and the C-terminal half is responsible for the 5' incision. This is UvrABC system protein C from Mycoplasmoides gallisepticum (strain R(low / passage 15 / clone 2)) (Mycoplasma gallisepticum).